Consider the following 884-residue polypeptide: Receptor-like protein 39 (884 aa).

The N-terminal stretch at 1-24 (MSELLFRLNFLLLLLLSCVSLASS) is a signal peptide. Residues 25–847 (FFSFNDPVVG…EEEEQVLNWK (823 aa)) lie on the Extracellular side of the membrane. N59, N71, and N92 each carry an N-linked (GlcNAc...) asparagine glycan. 10 LRR repeats span residues 98–122 (FHQL…EFGM), 124–146 (NKLE…SFSN), 147–170 (LSML…VRNL), 171–196 (RKLT…LFEL), 197–223 (HNLA…NLNK), 225–245 (ELLD…ISNL), 246–268 (TQLT…VQNL), 269–292 (TKLS…LFTM), 294–318 (FLSY…SLSS), and 320–344 (LENL…LINL). N146 carries an N-linked (GlcNAc...) asparagine glycan. Residues N190, N208, N244, and N267 are each glycosylated (N-linked (GlcNAc...) asparagine). 2 N-linked (GlcNAc...) asparagine glycosylation sites follow: N304 and N313. One copy of the LRR 11; degenerate repeat lies at 345–365 (KELHLSFLNTSYPINLKLFSS). Residue N353 is glycosylated (N-linked (GlcNAc...) asparagine). LRR repeat units follow at residues 366–391 (LKYL…SYIP), 392–413 (STLE…ILKT), 414–438 (LPNL…LWSL), 440–463 (RLSS…ILVN), and 464–487 (SSVR…PLSV). N403 is a glycosylation site (N-linked (GlcNAc...) asparagine). A glycan (N-linked (GlcNAc...) asparagine) is linked at N463. The LRR 17; degenerate repeat unit spans residues 488–507 (NYFSARNNRYGGDIPLSICS). LRR repeat units lie at residues 508–529 (RRSL…PPCP), 530–553 (SNFL…YYAD), 554–577 (APLR…LLNC), 579–601 (ALQF…LKAL), 602–625 (PKLQ…NQGS), 628–652 (FPEL…FFEN), 702–725 (SSSA…IGLL), 726–749 (KALI…LANL), 750–773 (KKIE…IGTL), and 775–798 (FLAY…QITG). N520 carries N-linked (GlcNAc...) asparagine glycosylation. A glycan (N-linked (GlcNAc...) asparagine) is linked at N576. N-linked (GlcNAc...) asparagine glycosylation is present at N732. N780 is a glycosylation site (N-linked (GlcNAc...) asparagine). A helical transmembrane segment spans residues 848–868 (GVGIGYGVGVLLGLAIAQLIA). Residues 869–884 (SYKPEWLVFLFQSRNH) are Cytoplasmic-facing.

The protein belongs to the RLP family.

It is found in the cell membrane. This is Receptor-like protein 39 from Arabidopsis thaliana (Mouse-ear cress).